Reading from the N-terminus, the 687-residue chain is Ataxin-1-like (687 aa).

Residues 1-19 (MKPVHERSQECLPPKKRDL) show a composition bias toward basic and acidic residues. 3 disordered regions span residues 1 to 46 (MKPV…SEWS), 185 to 223 (ATPP…LDLA), and 261 to 294 (SALE…KGES). The interval 20 to 197 (PVTSEDMGRT…PPQAASPAQS (178 aa)) is interaction with NCOR2 and ATXN1. The self-association stretch occupies residues 20 to 197 (PVTSEDMGRT…PPQAASPAQS (178 aa)). Composition is skewed to polar residues over residues 28–43 (RTTS…SDAS) and 198–219 (FNKS…NTQP). The segment covering 272–283 (RQRERNVRRESE) has biased composition (basic and acidic residues). Serine 282 is subject to Phosphoserine. Threonine 328 carries the phosphothreonine modification. The interval 356–379 (DEPSPLNLSHHNLDHQGEGRGSAR) is disordered. Phosphoserine is present on serine 359. Residues 455 to 586 (PPPVTSSHLP…SISLQSLNSN (132 aa)) form the AXH domain. The disordered stretch occupies residues 587 to 649 (SVSQASCAPP…PGAQACWPAP (63 aa)).

Belongs to the ATXN1 family. In terms of assembly, homodimer. Interacts (via AXH domain) with NCOR2. Interacts with ATXN1 and CIC. Directly interacts with RBPJ; this interaction is disrupted in the presence of Notch intracellular domain. Competes with ATXN1 for RBPJ-binding. Found in a complex with CIC and ATXN1. As to expression, expressed in the cortex and hypothalamus (at protein level). Expressed in neuronal cells. Highly expressed in Purkinje cells of cerebellum.

It localises to the nucleus. The protein localises to the cell projection. Its subcellular location is the dendrite. Its function is as follows. Chromatin-binding factor that repress Notch signaling in the absence of Notch intracellular domain by acting as a CBF1 corepressor. Binds to the HEY promoter and might assist, along with NCOR2, RBPJ-mediated repression. Can suppress the cytotoxicity of ATXN1 in spinocerebellar ataxia type 1 (SCA1). In concert with CIC and ATXN1, involved in brain development. The protein is Ataxin-1-like (Atxn1l) of Mus musculus (Mouse).